Consider the following 181-residue polypeptide: Ferredoxin C 2, chloroplastic (181 aa).

The N-terminal 44 residues, 1-44, are a transit peptide targeting the chloroplast; it reads MALILPCTFCTSLQKKNFPINRRYITNFRRGATTATCEFRIPVE. Residues 59 to 151 enclose the 2Fe-2S ferredoxin-type domain; that stretch reads HKVTVHDRQR…DLEVETQDED (93 aa). [2Fe-2S] cluster is bound by residues Cys-97, Cys-102, Cys-105, and Cys-135.

Belongs to the 2Fe2S plant-type ferredoxin family. The cofactor is [2Fe-2S] cluster.

Its subcellular location is the plastid. The protein localises to the chloroplast. In terms of biological role, ferredoxins are iron-sulfur proteins that transfer electrons in a wide variety of metabolic reactions. Mediates alternative electron partitioning in conditions of acceptor limitation at photosystem I. The sequence is that of Ferredoxin C 2, chloroplastic from Arabidopsis thaliana (Mouse-ear cress).